The primary structure comprises 169 residues: MSVLQVLHIPDERLRKVAKPVEEVNAEIQRIVDDMFETMYAEEGIGLAATQVDIHQRIIVIDVSENRDERLVLINPELLEKSGETGIEEGCLSIPEQRALVPRAEKVKIRALDRNGNPFELEADGLLAICIQHEMDHLVGKLFIDYLSPLKQQRIRQKVEKLDRLNARA.

2 residues coordinate Fe cation: Cys-91 and His-133. The active site involves Glu-134. Residue His-137 participates in Fe cation binding.

The protein belongs to the polypeptide deformylase family. It depends on Fe(2+) as a cofactor.

It carries out the reaction N-terminal N-formyl-L-methionyl-[peptide] + H2O = N-terminal L-methionyl-[peptide] + formate. Its function is as follows. Removes the formyl group from the N-terminal Met of newly synthesized proteins. Requires at least a dipeptide for an efficient rate of reaction. N-terminal L-methionine is a prerequisite for activity but the enzyme has broad specificity at other positions. The polypeptide is Peptide deformylase (Salmonella typhi).